The following is a 1133-amino-acid chain: MPVQAPQWTDFLSCPICTQTFDETIRKPISLGCGHTVCKMCLNKLHRKACPFDQTTINTDIELLPVNSALLQLVGAQVPEQQPITLCSGVEDTKHYEEAKKCVEELALYLKPLSSARGVGLNSTTQSVLSRPMQRKLVTLVHCQLVEEEGRIRAMRAARSLGERTVTELILQHQNPQQLSSNLWAAVRARGCQFLGPAMQEEALKLVLLALEDGSALSRKVLVLFVVQRLEPRFPQASKTSIGHVVQLLYRASCFKVTKRDEDSSLMQLKEEFRTYEALRREHDSQIVQIAMEAGLRIAPDQWSSLLYGDQSHKSHMQSIIDKLQTPASFAQSVQELTIALQRTGDPANLNRLRPHLELLANIDPSPDAPPPTWEQLENGLVAVRTVVHGLVDYIQNHSKKGADQQQPPQHSKYKTYMCRDMKQRGGCPRGASCTFAHSQEELEKFRKMNKRLVPRRPLSASLGQLNEVGLPSAAILPDEGAVDLPSRKPPALPNGIVSTGNTVTQLIPRGTDPSYDSSLKPGKIDHLSSSAPGSPPDLLESVPKSISALPVNPHSIPPRGPADLPPMPVTKPLQMVPRGSQLYPAQQTDVYYQDPRGAAPPFEPAPYQQGMYYTPPPQCVSRFVRPPPSAPEPAPPYLDHYPPYLQERVVNSQYGTQPQQYPPIYPSHYDGRRVYPAPSYTREEIFRESPIPIEIPPAAVPSYVPESRERYQQIESYYPVAPHPTQIRPSYLREPPYSRLPPPPQPHPSLDELHRRRKEIMAQLEERKVISPPPFAPSPTLPPTFHPEEFLDEDLKVAGKYKGNDYSQYSPWSCDTIGSYIGTKDAKPKDVVAAGSVEMMNVESKGMRDQRLDLQRRAAETSDDDLIPFGDRPTVSRFGAISRTSKTIYQGAGPMQAMAPQGAPTKSINISDYSPYGTHGGWGASPYSPHQNIPSQGHFSERERISMSEVASHGKPLPSAEREQLRLELQQLNHQISQQTQLRGLEAVSNRLVLQREANTLAGQSQPPPPPPPKWPGMISSEQLSLELHQVEREIGKRTRELSMENQCSLDMKSKLNTSKQAENGQPEPQNKVPAEDLTLTFSDVPNGSALTQENISLLSNKTSSLNLSEDPEGGGDNNDSQRSGVTPSSAP.

Zn(2+) is bound by residues cysteine 14, cysteine 17, cysteine 33, histidine 35, cysteine 38, cysteine 50, and aspartate 53. An RING-type; degenerate zinc finger spans residues 14–54; sequence CPICTQTFDETIRKPISLGCGHTVCKMCLNKLHRKACPFDQ. The tract at residues 89-173 is HEPN-N; sequence GVEDTKHYEE…RTVTELILQH (85 aa). An ROQ region spans residues 174-326; it reads QNPQQLSSNL…MQSIIDKLQT (153 aa). Residues 327–396 form an HEPN-C region; that stretch reads PASFAQSVQE…VVHGLVDYIQ (70 aa). The segment at 413 to 441 adopts a C3H1-type zinc-finger fold; it reads KYKTYMCRDMKQRGGCPRGASCTFAHSQE. Serine 462, serine 531, serine 535, and serine 863 each carry phosphoserine. Positions 505–542 are disordered; it reads TQLIPRGTDPSYDSSLKPGKIDHLSSSAPGSPPDLLES. Disordered regions lie at residues 1000–1019, 1058–1078, and 1094–1133; these read NTLA…WPGM, NTSK…PAED, and QENI…SSAP. The span at 1007 to 1016 shows a compositional bias: pro residues; the sequence is QPPPPPPPKW. The segment covering 1058 to 1070 has biased composition (polar residues); the sequence is NTSKQAENGQPEP. Low complexity predominate over residues 1096–1110; sequence NISLLSNKTSSLNLS. At serine 1110 the chain carries Phosphoserine. Residues 1119–1133 show a composition bias toward polar residues; sequence NNDSQRSGVTPSSAP.

As to quaternary structure, able to homodimerize. Interacts with DDX6 and EDC4. Interacts with CCR4-NOT deadenylase complex. Interacts with RC3H1; the interaction is RNA independent. In terms of processing, proteolytically cleaved after Arg-510 and Arg-579 by MALT1 in activated CD4(+) T cells; cleavage at Arg-510 and Arg-579 is critical for promoting RC3H1 degradation in response to T-cell receptor (TCR) stimulation, and hence is necessary for prolonging the stability of a set of mRNAs controlling Th17 cell differentiation. As to expression, widely expressed. Expressed at higher level in cerebellum, spleen, ovary and liver.

It is found in the cytoplasm. The protein localises to the P-body. The protein resides in the cytoplasmic granule. It carries out the reaction S-ubiquitinyl-[E2 ubiquitin-conjugating enzyme]-L-cysteine + [acceptor protein]-L-lysine = [E2 ubiquitin-conjugating enzyme]-L-cysteine + N(6)-ubiquitinyl-[acceptor protein]-L-lysine.. It participates in protein modification; protein ubiquitination. Its function is as follows. Post-transcriptional repressor of mRNAs containing a conserved stem loop motif, called constitutive decay element (CDE), which is often located in the 3'-UTR, as in HMGXB3, ICOS, IER3, NFKBID, NFKBIZ, PPP1R10, TNF, TNFRSF4 and in many more mRNAs. Cleaves translationally inactive mRNAs harboring a stem-loop (SL), often located in their 3'-UTRs, during the early phase of inflammation in a helicase UPF1-independent manner. Binds to CDE and promotes mRNA deadenylation and degradation. This process does not involve miRNAs. In follicular helper T (Tfh) cells, represses of ICOS and TNFRSF4 expression, thus preventing spontaneous Tfh cell differentiation, germinal center B-cell differentiation in the absence of immunization and autoimmunity. In resting or LPS-stimulated macrophages, controls inflammation by suppressing TNF expression. Also recognizes CDE in its own mRNA and in that of paralogous RC3H2, possibly leading to feedback loop regulation. Recognizes and binds mRNAs containing a hexaloop stem-loop motif, called alternative decay element (ADE). Together with ZC3H12A, destabilizes TNFRSF4/OX40 mRNA by binding to the conserved stem loop structure in its 3'UTR. Able to interact with double-stranded RNA (dsRNA). miRNA-binding protein that regulates microRNA homeostasis. Enhances DICER-mediated processing of pre-MIR146a but reduces mature MIR146a levels through an increase of 3' end uridylation. Both inhibits ICOS mRNA expression and they may act together to exert the suppression. Acts as a ubiquitin E3 ligase. Pairs with E2 enzymes UBE2A, UBE2B, UBE2D2, UBE2F, UBE2G1, UBE2G2 and UBE2L3 and produces polyubiquitin chains. Shows the strongest activity when paired with UBE2N:UBE2V1 or UBE2N:UBE2V2 E2 complexes and generate both short and long polyubiquitin chains. The polypeptide is Roquin-1 (Homo sapiens (Human)).